Consider the following 315-residue polypeptide: Olfactory receptor 5A1 (315 aa).

Over 1 to 28 (MSITKAWNSSSVTMFILLGFTDHPELQA) the chain is Extracellular. N-linked (GlcNAc...) asparagine glycosylation occurs at N8. The helical transmembrane segment at 29–52 (LLFVTFLGIYLTTLAWNLALIFLI) threads the bilayer. The Cytoplasmic portion of the chain corresponds to 53–60 (RGDTHLHT). The chain crosses the membrane as a helical span at residues 61–82 (PMYFFLSNLSFIDICYSSAVAP). Residues 83–103 (NMLTDFFWEQKTISFVGCAAQ) are Extracellular-facing. An intrachain disulfide couples C100 to C192. Residues 104–123 (FFFFVGMGLSECLLLTAMAY) form a helical membrane-spanning segment. The Cytoplasmic portion of the chain corresponds to 124 to 142 (DRYAAISSPLLYPTIMTQG). A helical membrane pass occupies residues 143 to 161 (LCTRMVVGAYVGGFLSSLI). Residues 162–198 (QASSIFRLHFCGPNIINHFFCDLPPVLALSCSDTFLS) are Extracellular-facing. Residues 199–222 (QVVNFLVVVTVGGTSFLQLLISYG) form a helical membrane-spanning segment. Residues 223 to 239 (YIVSAVLKIPSAEGRWK) are Cytoplasmic-facing. A helical membrane pass occupies residues 240 to 262 (ACNTCASHLMVVTLLFGTALFVY). At 263–275 (LRPSSSYLLGRDK) the chain is on the extracellular side. A helical transmembrane segment spans residues 276 to 295 (VVSVFYSLVIPMLNPLIYSL). Residues 296-315 (RNKEIKDALWKVLERKKVFS) lie on the Cytoplasmic side of the membrane.

Belongs to the G-protein coupled receptor 1 family.

The protein resides in the cell membrane. In terms of biological role, odorant receptor. The chain is Olfactory receptor 5A1 (OR5A1) from Homo sapiens (Human).